The sequence spans 617 residues: Putative type VI secretion system protein VgrGB (617 aa).

The tract at residues 449-469 (RTFHATNPSPYPLPASKTRTS) is disordered.

Belongs to the VgrG protein family.

In terms of biological role, a Vgr protein that is probably part of a type VI secretion system (T6SS). May be required for export of proteins involved in Rhs-mediated cellular contact-dependent growth inhibition (CDI). The chain is Putative type VI secretion system protein VgrGB (vgrGB) from Dickeya dadantii (strain 3937) (Erwinia chrysanthemi (strain 3937)).